Reading from the N-terminus, the 1088-residue chain is MGKYNLILSEYLSFIYNSQSAVQIPIYYSSNSELENRCIEFHSKCLENSKNGLSLKKLFVEYSDVMENATLLSILSYSYDKYNAVERKLVKYAKGKPLEADLTVNELDYENNKITSELFPTAEEYTDSLMDPAILTSLSSNLNAVMFWLEKHENDVAEKLKIYKRRLDLFTIVASTVNKYGVPRHNAKYRYEYEVMKDKPYYLVTWANSSIEMLMSVFSHEDYLIARELIVLSYSNRSTLAKLVSSPMSILVALVDINGTFITNEELELEFSNKYVRAIVPDQTFDELKQMLDNMRKAGLTDIPKMIQDWLVDCSIEKFPLMAKIYSWSFHVGFRKQKMLDAALDQLKTEYTEDVDDEMYREYTMLIRDEVVKMLEEPVKHDDHLLQDSELAGLLSMSSASNGESRQLKFGRKTIFSTKKNMHVMDDMANGRYTPGIIPPVNVDKPIPLGRRDVPGRRTRIIFILPYEYFIAQHAVVEKMLIYAKHTREYAEFYSQSNQLLSYGDVTRFLSNNSMVLYTDVSQWDSSQHNTQPFRKGIIMGLDMLANMTNDARVIQTLNLYKQTQINLMDSYVQIPDGNVIKKIQYGAVASGEKQTKAANSIANLALIKTVLSRISNKYSFATKIIRVDGDDNYAVLQFNTEVTEQMVQDVSNDVRETYARMNAKVKALVSTVGIEIAKRYIAGGKIFFRAGINLLNNEKRGQSTQWDQAAVLYSNYIVNRLRGFETDREFILTKIMQMTSVAITGSLRLFPSERVLTTNSTFKVFDSEDFIIEYGTTDDEVYIQRAFMSLSSQKSGIADEIAASSTFKNYVSRLSGQLLFSKNNIVSRGIALTEKAKLNSYAPISLEKRRAQISALLTMLQKPVTFKSSKITINDILRDIKPFFTVNEAHLPIQYQKFMPTLPDNVQYIIQCIGSRTYQIEDDGSKSAISRLISKYSVYKPSIEELYKVISLHENEIQLYLISLGIPKIDADTYVGSKIYSQDKYRILESYVCNLLSINYGCYQLFDFNSPDLEKLIRIPFKGKIPAVTFILHLYAKLEVINHAIKNGSWISLFCNYPKSEMIKLWKKMWNITSLRSPYTNANFFQD.

The region spanning 501 to 687 (LSYGDVTRFL…AKRYIAGGKI (187 aa)) is the RdRp catalytic domain.

This sequence belongs to the reoviridae RNA-directed RNA polymerase family. As to quaternary structure, interacts with VP3 (Potential). Interacts with VP2; this interaction activates VP1. Interacts with NSP5; this interaction is probably necessary for the formation of functional virus factories. Interacts with NSP2; this interaction is weak. Mg(2+) serves as cofactor.

It localises to the virion. It catalyses the reaction RNA(n) + a ribonucleoside 5'-triphosphate = RNA(n+1) + diphosphate. Functionally, RNA-directed RNA polymerase that is involved in both transcription and genome replication. Together with VP3 capping enzyme, forms an enzyme complex positioned near the channels situated at each of the five-fold vertices of the core. Following infection, the outermost layer of the virus is lost, leaving a double-layered particle (DLP) made up of the core and VP6 shell. VP1 then catalyzes the transcription of fully conservative plus-strand genomic RNAs that are extruded through the DLP's channels into the cytoplasm where they function as mRNAs for translation of viral proteins. One copy of each of the viral (+)RNAs is also recruited during core assembly, together with newly synthesized polymerase complexes and VP2. The polymerase of these novo-formed particles catalyzes the synthesis of complementary minus-strands leading to dsRNA formation. To do so, the polymerase specifically recognizes and binds 4 bases 5'-UGUG-3' in the conserved 3'-sequence of plus-strand RNA templates. VP2 presumably activates the autoinhibited VP1-RNA complex to coordinate packaging and genome replication. Once dsRNA synthesis is complete, the polymerase switches to the transcriptional mode, thus providing secondary transcription. This Bos taurus (Bovine) protein is RNA-directed RNA polymerase.